A 186-amino-acid polypeptide reads, in one-letter code: Ribosome-recycling factor (186 aa).

The protein belongs to the RRF family.

The protein resides in the cytoplasm. Its function is as follows. Responsible for the release of ribosomes from messenger RNA at the termination of protein biosynthesis. May increase the efficiency of translation by recycling ribosomes from one round of translation to another. This is Ribosome-recycling factor from Coprothermobacter proteolyticus (strain ATCC 35245 / DSM 5265 / OCM 4 / BT).